The primary structure comprises 478 residues: Putative multidrug resistance outer membrane protein MdtQ (478 aa).

Positions 1 to 21 are cleaved as a signal peptide; sequence MNRDSFYPAIACFPLLLMLAG. The N-palmitoyl cysteine moiety is linked to residue Cys22. The S-diacylglycerol cysteine moiety is linked to residue Cys22.

Belongs to the outer membrane factor (OMF) (TC 1.B.17) family.

The protein resides in the cell outer membrane. Functionally, could be involved in resistance to puromycin, acriflavine and tetraphenylarsonium chloride. This Escherichia coli (strain K12) protein is Putative multidrug resistance outer membrane protein MdtQ (mdtQ).